A 499-amino-acid chain; its full sequence is 2-isopropylmalate synthase (499 aa).

One can recognise a Pyruvate carboxyltransferase domain in the interval 5 to 267 (IKIFDTTLRD…ETGINLGEIA (263 aa)). 4 residues coordinate Mn(2+): D14, H202, H204, and N238. Residues 391 to 499 (SVEVLHVISG…YLSALNRIRR (109 aa)) are regulatory domain.

Belongs to the alpha-IPM synthase/homocitrate synthase family. LeuA type 1 subfamily. Mn(2+) is required as a cofactor.

The protein resides in the cytoplasm. The enzyme catalyses 3-methyl-2-oxobutanoate + acetyl-CoA + H2O = (2S)-2-isopropylmalate + CoA + H(+). Its pathway is amino-acid biosynthesis; L-leucine biosynthesis; L-leucine from 3-methyl-2-oxobutanoate: step 1/4. Its function is as follows. Catalyzes the condensation of the acetyl group of acetyl-CoA with 3-methyl-2-oxobutanoate (2-ketoisovalerate) to form 3-carboxy-3-hydroxy-4-methylpentanoate (2-isopropylmalate). The protein is 2-isopropylmalate synthase of Pyrococcus furiosus (strain ATCC 43587 / DSM 3638 / JCM 8422 / Vc1).